Here is a 231-residue protein sequence, read N- to C-terminus: Androgen-dependent TFPI-regulating protein (231 aa).

Residues 1-7 are Cytoplasmic-facing; it reads MTRTTTC. The helical transmembrane segment at 8 to 28 threads the bilayer; it reads VYHFLVWNWYIFLNYYIPLIG. Topologically, residues 29 to 45 are extracellular; sequence KDDEKLKEFHDGGRSKY. Residues 46 to 66 traverse the membrane as a helical segment; sequence LTLLNLLLQAIFFGVACLDDV. The Cytoplasmic segment spans residues 67-85; that stretch reads LKRIIGRKDIKFITSTRDL. A helical transmembrane segment spans residues 86–106; the sequence is LFSTLVFPISTFIFLVFWTLF. At 107–123 the chain is on the extracellular side; sequence YYDRSLIYPKGLDDYFP. Residues 124–144 form a helical membrane-spanning segment; sequence AWLNHAMHTYILLFVLVETIL. Over 145 to 154 the chain is Cytoplasmic; it reads RPHHYPSKKL. Residues 155–172 form a helical membrane-spanning segment; it reads GLALLGACNLAYITRVLW. Over 173–190 the chain is Extracellular; the sequence is RYSQTGNWVYPVFASLNP. A helical membrane pass occupies residues 191–211; that stretch reads LGIIIFFLVCYILNASIYLVG. Over 212–231 the chain is Cytoplasmic; it reads EKINHWKWGATVKPLMKKKK.

It belongs to the AIG1 family. As to expression, highly expressed in flank organs and weakly in testis and earlobes.

It is found in the cell membrane. It catalyses the reaction 9-hexadecanoyloxy-octadecanoate + H2O = 9-hydroxy-octadecanoate + hexadecanoate + H(+). It carries out the reaction 12-hexadecanoyloxy-octadecanoate + H2O = 12-hydroxyoctadecanoate + hexadecanoate + H(+). The enzyme catalyses 9-(9Z-hexadecenoyloxy)-octadecanoate + H2O = (9Z)-hexadecenoate + 9-hydroxy-octadecanoate + H(+). The catalysed reaction is 12-(9Z-hexadecenoyloxy)-octadecanoate + H2O = 12-hydroxyoctadecanoate + (9Z)-hexadecenoate + H(+). It catalyses the reaction 13-(9Z-hexadecenoyloxy)-octadecanoate + H2O = 13-hydroxy-octadecanoate + (9Z)-hexadecenoate + H(+). It carries out the reaction 9-octadecanoyloxy-octadecanoate + H2O = 9-hydroxy-octadecanoate + octadecanoate + H(+). The enzyme catalyses 12-octadecanoyloxy-octadecanoate + H2O = 12-hydroxyoctadecanoate + octadecanoate + H(+). The catalysed reaction is 13-octadecanoyloxy-octadecanoate + H2O = 13-hydroxy-octadecanoate + octadecanoate + H(+). It catalyses the reaction 9-(9Z-octadecenoyloxy)-octadecanoate + H2O = 9-hydroxy-octadecanoate + (9Z)-octadecenoate + H(+). It carries out the reaction 12-(9Z-octadecenoyloxy)-octadecanoate + H2O = 12-hydroxyoctadecanoate + (9Z)-octadecenoate + H(+). The enzyme catalyses 13-(9Z-octadecenoyloxy)-octadecanoate + H2O = 13-hydroxy-octadecanoate + (9Z)-octadecenoate + H(+). The catalysed reaction is 5-(9Z-octadecenoyloxy)-octadecanoate + H2O = 5-hydroxy-octadecanoate + (9Z)-octadecenoate + H(+). Hydrolyzes bioactive fatty-acid esters of hydroxy-fatty acids (FAHFAs), but not other major classes of lipids. Shows a preference for FAHFAs with branching distal from the carboxylate head group of the lipids. Regulates the expression and the cell-associated anticoagulant activity of the inhibitor TFPI in endothelial cells (in vitro). The protein is Androgen-dependent TFPI-regulating protein (ADTRP) of Mesocricetus auratus (Golden hamster).